The following is a 231-amino-acid chain: Large ribosomal subunit protein uL1 (231 aa).

Belongs to the universal ribosomal protein uL1 family. As to quaternary structure, part of the 50S ribosomal subunit.

Binds directly to 23S rRNA. The L1 stalk is quite mobile in the ribosome, and is involved in E site tRNA release. Its function is as follows. Protein L1 is also a translational repressor protein, it controls the translation of the L11 operon by binding to its mRNA. The chain is Large ribosomal subunit protein uL1 from Pseudomonas fluorescens (strain Pf0-1).